A 179-amino-acid polypeptide reads, in one-letter code: Large ribosomal subunit protein uL5 (179 aa).

This sequence belongs to the universal ribosomal protein uL5 family. Part of the 50S ribosomal subunit; part of the 5S rRNA/L5/L18/L25 subcomplex. Contacts the 5S rRNA and the P site tRNA. Forms a bridge to the 30S subunit in the 70S ribosome.

This is one of the proteins that bind and probably mediate the attachment of the 5S RNA into the large ribosomal subunit, where it forms part of the central protuberance. In the 70S ribosome it contacts protein S13 of the 30S subunit (bridge B1b), connecting the 2 subunits; this bridge is implicated in subunit movement. Contacts the P site tRNA; the 5S rRNA and some of its associated proteins might help stabilize positioning of ribosome-bound tRNAs. This Pseudomonas putida (strain ATCC 700007 / DSM 6899 / JCM 31910 / BCRC 17059 / LMG 24140 / F1) protein is Large ribosomal subunit protein uL5.